Here is a 192-residue protein sequence, read N- to C-terminus: Xanthine phosphoribosyltransferase (192 aa).

Xanthine is bound by residues Leu20 and Asn27. 128–132 (ANGDA) provides a ligand contact to 5-phospho-alpha-D-ribose 1-diphosphate. Lys156 lines the xanthine pocket.

It belongs to the purine/pyrimidine phosphoribosyltransferase family. Xpt subfamily. In terms of assembly, homodimer.

Its subcellular location is the cytoplasm. The enzyme catalyses XMP + diphosphate = xanthine + 5-phospho-alpha-D-ribose 1-diphosphate. It participates in purine metabolism; XMP biosynthesis via salvage pathway; XMP from xanthine: step 1/1. Functionally, converts the preformed base xanthine, a product of nucleic acid breakdown, to xanthosine 5'-monophosphate (XMP), so it can be reused for RNA or DNA synthesis. The polypeptide is Xanthine phosphoribosyltransferase (Staphylococcus aureus (strain JH1)).